The primary structure comprises 62 residues: Photosystem II reaction center protein Z (62 aa).

The next 2 membrane-spanning stretches (helical) occupy residues 8 to 28 and 41 to 61; these read FLIALVLFSLLMVIGVPVAYA and YVGSAIWAILVVAVAILNFLV.

This sequence belongs to the PsbZ family. PSII is composed of 1 copy each of membrane proteins PsbA, PsbB, PsbC, PsbD, PsbE, PsbF, PsbH, PsbI, PsbJ, PsbK, PsbL, PsbM, PsbT, PsbX, PsbY, PsbZ, Psb30/Ycf12, peripheral proteins PsbO, CyanoQ (PsbQ), PsbU, PsbV and a large number of cofactors. It forms dimeric complexes.

It localises to the cellular thylakoid membrane. May control the interaction of photosystem II (PSII) cores with the light-harvesting antenna, regulates electron flow through the 2 photosystem reaction centers. PSII is a light-driven water plastoquinone oxidoreductase, using light energy to abstract electrons from H(2)O, generating a proton gradient subsequently used for ATP formation. The protein is Photosystem II reaction center protein Z of Microcystis aeruginosa (strain NIES-843 / IAM M-2473).